A 423-amino-acid polypeptide reads, in one-letter code: Protein TylM3 (423 aa).

The segment covering 1 to 21 has biased composition (low complexity); that stretch reads MNTAAGPTGTAAGGTTAPAAA. Disordered regions lie at residues 1 to 26 and 117 to 149; these read MNTA…DLSR and GSAL…RDDP. Residues 139–149 are compositionally biased toward basic and acidic residues; the sequence is RPPDREERDDP.

Belongs to the cytochrome P450 family.

Its pathway is antibiotic biosynthesis; tylosin biosynthesis. In terms of biological role, involved in the biosynthesis of the macrolide antibiotic tylosin derived from the polyketide lactone tylactone. TylM3 is required for the glycosylation of the 5-hydroxyl group of tylactone to yield 5-O-mycaminosytylactone. The sequence is that of Protein TylM3 from Streptomyces fradiae (Streptomyces roseoflavus).